Consider the following 120-residue polypeptide: Ribonuclease P protein component 2 (120 aa).

This sequence belongs to the eukaryotic/archaeal RNase P protein component 2 family. Consists of a catalytic RNA component and at least 4-5 protein subunits. Forms a subcomplex with Rnp3 which stimulates the catalytic RNA.

The protein resides in the cytoplasm. It carries out the reaction Endonucleolytic cleavage of RNA, removing 5'-extranucleotides from tRNA precursor.. Functionally, part of ribonuclease P, a protein complex that generates mature tRNA molecules by cleaving their 5'-ends. The RNA is catalytic, but its KM for pre-tRNA is 170-fold decreased in the presence of the 4 known protein subunits (Rnp1-4). The protein subunits also decrease the amount of Mg(2+) needed for activity. The protein is Ribonuclease P protein component 2 of Pyrococcus furiosus (strain ATCC 43587 / DSM 3638 / JCM 8422 / Vc1).